We begin with the raw amino-acid sequence, 360 residues long: Cytochrome b-c1 complex subunit 2, mitochondrial (360 aa).

A mitochondrion-targeting transit peptide spans 1 to 15; it reads MLSSRLQFAQQTARK.

This sequence belongs to the peptidase M16 family. UQCRC2/QCR2 subfamily. In terms of assembly, component of the ubiquinol-cytochrome c oxidoreductase (cytochrome b-c1 complex, complex III, CIII), a multisubunit enzyme composed of 3 respiratory subunits cytochrome b, cytochrome c1 and Rieske protein, 2 core protein subunits, and additional low-molecular weight protein subunits. The complex exists as an obligatory dimer and forms supercomplexes (SCs) in the inner mitochondrial membrane with cytochrome c oxidase (complex IV, CIV).

The protein resides in the mitochondrion inner membrane. Functionally, component of the ubiquinol-cytochrome c oxidoreductase, a multisubunit transmembrane complex that is part of the mitochondrial electron transport chain which drives oxidative phosphorylation. The respiratory chain contains 3 multisubunit complexes succinate dehydrogenase (complex II, CII), ubiquinol-cytochrome c oxidoreductase (cytochrome b-c1 complex, complex III, CIII) and cytochrome c oxidase (complex IV, CIV), that cooperate to transfer electrons derived from NADH and succinate to molecular oxygen, creating an electrochemical gradient over the inner membrane that drives transmembrane transport and the ATP synthase. The cytochrome b-c1 complex catalyzes electron transfer from ubiquinol to cytochrome c, linking this redox reaction to translocation of protons across the mitochondrial inner membrane, with protons being carried across the membrane as hydrogens on the quinol. In the process called Q cycle, 2 protons are consumed from the matrix, 4 protons are released into the intermembrane space and 2 electrons are passed to cytochrome c. This chain is Cytochrome b-c1 complex subunit 2, mitochondrial (QCR2), found in Kluyveromyces lactis (strain ATCC 8585 / CBS 2359 / DSM 70799 / NBRC 1267 / NRRL Y-1140 / WM37) (Yeast).